We begin with the raw amino-acid sequence, 226 residues long: uncharacterized protein (226 aa).

An N-acetyltransferase domain is found at Tyr75–Ile226.

It belongs to the acetyltransferase family.

This is an uncharacterized protein from Methanocaldococcus jannaschii (strain ATCC 43067 / DSM 2661 / JAL-1 / JCM 10045 / NBRC 100440) (Methanococcus jannaschii).